Here is a 475-residue protein sequence, read N- to C-terminus: Ribulose bisphosphate carboxylase large chain (475 aa).

Residues 1-2 constitute a propeptide that is removed on maturation; sequence MS. Pro3 carries the N-acetylproline modification. Lys14 bears the N6,N6,N6-trimethyllysine mark. The substrate site is built by Asn123 and Thr173. Lys175 serves as the catalytic Proton acceptor. A substrate-binding site is contributed by Lys177. The Mg(2+) site is built by Lys201, Asp203, and Glu204. The residue at position 201 (Lys201) is an N6-carboxylysine. The active-site Proton acceptor is His294. Residues Arg295, His327, and Ser379 each coordinate substrate.

Belongs to the RuBisCO large chain family. Type I subfamily. Heterohexadecamer of 8 large chains and 8 small chains; disulfide-linked. The disulfide link is formed within the large subunit homodimers. The cofactor is Mg(2+). Post-translationally, the disulfide bond which can form in the large chain dimeric partners within the hexadecamer appears to be associated with oxidative stress and protein turnover.

Its subcellular location is the plastid. The protein resides in the chloroplast. It carries out the reaction 2 (2R)-3-phosphoglycerate + 2 H(+) = D-ribulose 1,5-bisphosphate + CO2 + H2O. The catalysed reaction is D-ribulose 1,5-bisphosphate + O2 = 2-phosphoglycolate + (2R)-3-phosphoglycerate + 2 H(+). RuBisCO catalyzes two reactions: the carboxylation of D-ribulose 1,5-bisphosphate, the primary event in carbon dioxide fixation, as well as the oxidative fragmentation of the pentose substrate in the photorespiration process. Both reactions occur simultaneously and in competition at the same active site. This chain is Ribulose bisphosphate carboxylase large chain, found in Angiopteris lygodiifolia (Turnip fern).